We begin with the raw amino-acid sequence, 256 residues long: Enolase-phosphatase E1 (256 aa).

Aspartate 13 and glutamate 15 together coordinate Mg(2+). Residues 127–128 (SS) and lysine 175 contribute to the substrate site. Residue aspartate 202 participates in Mg(2+) binding.

Belongs to the HAD-like hydrolase superfamily. MasA/MtnC family. Monomer. Requires Mg(2+) as cofactor.

Its subcellular location is the cytoplasm. It is found in the nucleus. It carries out the reaction 5-methylsulfanyl-2,3-dioxopentyl phosphate + H2O = 1,2-dihydroxy-5-(methylsulfanyl)pent-1-en-3-one + phosphate. Its pathway is amino-acid biosynthesis; L-methionine biosynthesis via salvage pathway; L-methionine from S-methyl-5-thio-alpha-D-ribose 1-phosphate: step 3/6. It participates in amino-acid biosynthesis; L-methionine biosynthesis via salvage pathway; L-methionine from S-methyl-5-thio-alpha-D-ribose 1-phosphate: step 4/6. Bifunctional enzyme that catalyzes the enolization of 2,3-diketo-5-methylthiopentyl-1-phosphate (DK-MTP-1-P) into the intermediate 2-hydroxy-3-keto-5-methylthiopentenyl-1-phosphate (HK-MTPenyl-1-P), which is then dephosphorylated to form the acireductone 1,2-dihydroxy-3-keto-5-methylthiopentene (DHK-MTPene). The sequence is that of Enolase-phosphatase E1 (utr4) from Botryotinia fuckeliana (strain B05.10) (Noble rot fungus).